Here is an 80-residue protein sequence, read N- to C-terminus: Putative defensin-like protein 28 (80 aa).

Positions 1 to 22 (MLRANVVVSLVIFAALMQCMNG) are cleaved as a signal peptide.

Belongs to the DEFL family.

It localises to the secreted. The chain is Putative defensin-like protein 28 from Arabidopsis thaliana (Mouse-ear cress).